The chain runs to 410 residues: Lysosome-associated membrane glycoprotein 2 (410 aa).

Residues 1–28 (MMCFRLSPVSGSGLVLSCLLLGAVQSYA) form the signal peptide. Residues 29–192 (FELNLPDSKA…SKEEFVCEED (164 aa)) form a first lumenal domain region. Over 29–375 (FELNLPDSKA…QDCSADEDNF (347 aa)) the chain is Lumenal. A disulfide bridge links cysteine 40 with cysteine 79. Residues asparagine 48, asparagine 58, asparagine 71, asparagine 75, asparagine 99, asparagine 119, asparagine 123, asparagine 179, asparagine 222, asparagine 229, asparagine 242, asparagine 260, asparagine 275, asparagine 300, asparagine 307, asparagine 317, and asparagine 356 are each glycosylated (N-linked (GlcNAc...) asparagine). A disulfide bridge links cysteine 153 with cysteine 189. A hinge region spans residues 193-228 (KSVTTVRPIIHTTVPPPTTTPTPLPPKVGNYSVSNG). The second lumenal domain stretch occupies residues 229–375 (NATCLLATMG…QDCSADEDNF (147 aa)). Cysteine 232 and cysteine 265 are oxidised to a cystine. Cysteines 331 and 368 form a disulfide. The chain crosses the membrane as a helical span at residues 376-399 (LVPIAVGAALAGVLALVLLAYFIG). Residues 400–410 (LKRHHTGYEQF) are Cytoplasmic-facing. Positions 401–404 (KRHH) are important for binding and subsequent lysosomal degradation of target proteins.

This sequence belongs to the LAMP family. In terms of assembly, monomer. Forms large homooligomers. Interacts (via its cytoplasmic region) with HSPA8; HSPA8 mediates recruitment of proteins with a KFERQ motif to the surface of the lysosome for chaperone-mediated autophagy. Interacts with HSP90 in the lysosome lumen; this enhances LAMP2 stability. Interacts with MLLT11. Interacts with ABCB9. Interacts with FURIN. Interacts with CT55; this interaction may be important for LAMP2 protein stability. Interacts with TMEM175; inhibiting the proton channel activity of TMEM175. Forms a ternary complex with RAB7A and RUFY4 (via RUN domain); the interaction with RAB7A is mediated by RUFY4 (via RUN and coiled coil domains). Post-translationally, extensively N-glycosylated. Contains a minor proportion of O-linked glycans.

It localises to the lysosome membrane. The protein resides in the endosome membrane. The protein localises to the cell membrane. Its subcellular location is the cytoplasmic vesicle. It is found in the autophagosome membrane. Lysosomal membrane glycoprotein which plays an important role in lysosome biogenesis, lysosomal pH regulation and autophagy. Acts as an important regulator of lysosomal lumen pH regulation by acting as a direct inhibitor of the proton channel TMEM175, facilitating lysosomal acidification for optimal hydrolase activity. Plays an important role in chaperone-mediated autophagy, a process that mediates lysosomal degradation of proteins in response to various stresses and as part of the normal turnover of proteins with a long biological half-live. Functions by binding target proteins, such as GAPDH, NLRP3 and MLLT11, and targeting them for lysosomal degradation. In the chaperone-mediated autophagy, acts downstream of chaperones, such as HSPA8/HSC70, which recognize and bind substrate proteins and mediate their recruitment to lysosomes, where target proteins bind LAMP2. Plays a role in lysosomal protein degradation in response to starvation. Required for the fusion of autophagosomes with lysosomes during autophagy. Cells that lack LAMP2 express normal levels of VAMP8, but fail to accumulate STX17 on autophagosomes, which is the most likely explanation for the lack of fusion between autophagosomes and lysosomes. Required for normal degradation of the contents of autophagosomes. Required for efficient MHC class II-mediated presentation of exogenous antigens via its function in lysosomal protein degradation; antigenic peptides generated by proteases in the endosomal/lysosomal compartment are captured by nascent MHC II subunits. Is not required for efficient MHC class II-mediated presentation of endogenous antigens. In Cricetulus griseus (Chinese hamster), this protein is Lysosome-associated membrane glycoprotein 2 (LAMP2).